A 123-amino-acid chain; its full sequence is Small ribosomal subunit protein uS13 (123 aa).

Residues 95–123 are disordered; sequence GLPVRGQSSKTNARTRKGPRRSVMSRKKK. Basic residues predominate over residues 107-123; sequence ARTRKGPRRSVMSRKKK.

This sequence belongs to the universal ribosomal protein uS13 family. In terms of assembly, part of the 30S ribosomal subunit. Forms a loose heterodimer with protein S19. Forms two bridges to the 50S subunit in the 70S ribosome.

In terms of biological role, located at the top of the head of the 30S subunit, it contacts several helices of the 16S rRNA. In the 70S ribosome it contacts the 23S rRNA (bridge B1a) and protein L5 of the 50S subunit (bridge B1b), connecting the 2 subunits; these bridges are implicated in subunit movement. Contacts the tRNAs in the A and P-sites. This is Small ribosomal subunit protein uS13 from Maridesulfovibrio salexigens (strain ATCC 14822 / DSM 2638 / NCIMB 8403 / VKM B-1763) (Desulfovibrio salexigens).